The sequence spans 699 residues: DNA ligase (699 aa).

A disordered region spans residues 1–20 (MTVQKPIESLSPAQAKREHR). NAD(+)-binding positions include 43-47 (DAEYD), 92-93 (SL), and E126. K128 (N6-AMP-lysine intermediate) is an active-site residue. The NAD(+) site is built by R149, E185, K301, and K325. 4 residues coordinate Zn(2+): C419, C422, C443, and C449. The BRCT domain maps to 621-699 (AKESPVAGKT…EEDWLKLVGE (79 aa)).

It belongs to the NAD-dependent DNA ligase family. LigA subfamily. The cofactor is Mg(2+). Requires Mn(2+) as cofactor.

It carries out the reaction NAD(+) + (deoxyribonucleotide)n-3'-hydroxyl + 5'-phospho-(deoxyribonucleotide)m = (deoxyribonucleotide)n+m + AMP + beta-nicotinamide D-nucleotide.. In terms of biological role, DNA ligase that catalyzes the formation of phosphodiester linkages between 5'-phosphoryl and 3'-hydroxyl groups in double-stranded DNA using NAD as a coenzyme and as the energy source for the reaction. It is essential for DNA replication and repair of damaged DNA. The protein is DNA ligase of Beijerinckia indica subsp. indica (strain ATCC 9039 / DSM 1715 / NCIMB 8712).